Consider the following 180-residue polypeptide: Negative modulator of initiation of replication (180 aa).

An interaction with DNA region spans residues arginine 115 to tyrosine 119.

The protein belongs to the SeqA family. As to quaternary structure, homodimer. Polymerizes to form helical filaments.

It localises to the cytoplasm. Functionally, negative regulator of replication initiation, which contributes to regulation of DNA replication and ensures that replication initiation occurs exactly once per chromosome per cell cycle. Binds to pairs of hemimethylated GATC sequences in the oriC region, thus preventing assembly of replication proteins and re-initiation at newly replicated origins. Repression is relieved when the region becomes fully methylated. The protein is Negative modulator of initiation of replication of Aliivibrio fischeri (strain ATCC 700601 / ES114) (Vibrio fischeri).